A 679-amino-acid chain; its full sequence is Methionine--tRNA ligase (679 aa).

A 'HIGH' region motif is present at residues 14 to 24; that stretch reads PYANGSIHLGH. Residues C145, C148, C158, and C161 each coordinate Zn(2+). The short motif at 331–335 is the 'KMSKS' region element; that stretch reads KMSKS. K334 serves as a coordination point for ATP. One can recognise a tRNA-binding domain in the interval 577 to 679; that stretch reads AFAAVDLRIA…SGAKPGQRVK (103 aa).

The protein belongs to the class-I aminoacyl-tRNA synthetase family. MetG type 1 subfamily. Homodimer. Zn(2+) serves as cofactor.

It is found in the cytoplasm. It carries out the reaction tRNA(Met) + L-methionine + ATP = L-methionyl-tRNA(Met) + AMP + diphosphate. Its function is as follows. Is required not only for elongation of protein synthesis but also for the initiation of all mRNA translation through initiator tRNA(fMet) aminoacylation. The sequence is that of Methionine--tRNA ligase from Pseudomonas paraeruginosa (strain DSM 24068 / PA7) (Pseudomonas aeruginosa (strain PA7)).